A 113-amino-acid polypeptide reads, in one-letter code: Large ribosomal subunit protein bL19 (113 aa).

It belongs to the bacterial ribosomal protein bL19 family.

This protein is located at the 30S-50S ribosomal subunit interface and may play a role in the structure and function of the aminoacyl-tRNA binding site. In Corynebacterium efficiens (strain DSM 44549 / YS-314 / AJ 12310 / JCM 11189 / NBRC 100395), this protein is Large ribosomal subunit protein bL19.